We begin with the raw amino-acid sequence, 82 residues long: uncharacterized protein (82 aa).

A signal peptide spans 1–19 (MKNLLKILLIIAFANPVFA).

This is an uncharacterized protein from Rickettsia prowazekii (strain Madrid E).